An 824-amino-acid polypeptide reads, in one-letter code: RelA-associated inhibitor (824 aa).

N-acetylmethionine is present on M1. Disordered stretches follow at residues 48–87 (SLWS…SPQK) and 99–271 (RSES…YERL). 7 positions are modified to phosphoserine: S84, S100, S102, S110, S113, S119, and S120. Phosphothreonine is present on T123. S134 is modified (phosphoserine). 6 positions are modified to omega-N-methylarginine: R137, R142, R144, R160, R167, and R180. S183, S187, and S203 each carry phosphoserine. The residue at position 205 (R205) is an Omega-N-methylarginine. Phosphothreonine is present on T275. S279 bears the Phosphoserine mark. 2 disordered regions span residues 291–370 (SLDG…RPIP) and 388–501 (RAVL…QTVP). A Phosphothreonine modification is found at T307. A phosphoserine mark is found at S315, S331, and S338. Residue T340 is modified to Phosphothreonine. The span at 359–370 (QPRSTPRQRPIP) shows a compositional bias: low complexity. Over residues 400–424 (APPPKLPPQPPPQPQMQPQPQPQPQ) the composition is skewed to pro residues. Over residues 425–440 (MQPQSQAQPQTPAPQQ) the composition is skewed to low complexity. A phosphoserine mark is found at S522, S563, and S593. The tract at residues 547–614 (FHRHGGPGPG…SVLRKVGSPR (68 aa)) is disordered. A compositionally biased stretch (pro residues) spans 575-597 (PPAPAPPAPIPPPAPPQSSPPEQ). ANK repeat units lie at residues 655–684 (EGIT…NVNS) and 688–717 (HGWT…AIFA). Residues 754-816 (MHNGVVYALW…PRNYFGLFPR (63 aa)) enclose the SH3 domain.

This sequence belongs to the iASPP family. In terms of assembly, interacts with TP63 and TP73. Interacts with RELA NF-kappa-B subunit and with SP1 via its C-terminal part. Interacts (via SH3 domain and ANK repeats) with p53/TP53; the interaction inhibits pro-apoptotic activity of p53/TP53. As to expression, most abundant in skin with high levels also found in heart, testis and stomach. In 15.5 dpc embryonic heart, expressed at higher levels in atria than ventricles.

It localises to the cytoplasm. The protein resides in the nucleus. Its function is as follows. Regulator that plays a central role in regulation of apoptosis and transcription via its interaction with NF-kappa-B and p53/TP53 proteins. Inhibits p53/TP53 function, possibly by preventing the association between p53/TP53 and ASPP1 or ASPP2, and therefore suppressing the subsequent activation of apoptosis. Is involved in NF-kappa-B dependent negative regulation of inflammatory response. The protein is RelA-associated inhibitor of Mus musculus (Mouse).